Consider the following 629-residue polypeptide: tRNA uridine 5-carboxymethylaminomethyl modification enzyme MnmG (629 aa).

FAD is bound at residue 13-18 (GGGHAG). 273-287 (GPRYCPSIEDKIHRF) provides a ligand contact to NAD(+).

This sequence belongs to the MnmG family. Homodimer. Heterotetramer of two MnmE and two MnmG subunits. FAD is required as a cofactor.

It localises to the cytoplasm. Its function is as follows. NAD-binding protein involved in the addition of a carboxymethylaminomethyl (cmnm) group at the wobble position (U34) of certain tRNAs, forming tRNA-cmnm(5)s(2)U34. The sequence is that of tRNA uridine 5-carboxymethylaminomethyl modification enzyme MnmG from Shewanella denitrificans (strain OS217 / ATCC BAA-1090 / DSM 15013).